The chain runs to 262 residues: Tropinone reductase homolog At2g29290 (262 aa).

Position 13 to 37 (13 to 37) interacts with NADP(+); it reads LVTGGTKGIGEAVVEELSILGARVH. Ser146 provides a ligand contact to substrate. The Proton acceptor role is filled by Tyr159.

It belongs to the short-chain dehydrogenases/reductases (SDR) family. SDR65C subfamily.

The sequence is that of Tropinone reductase homolog At2g29290 from Arabidopsis thaliana (Mouse-ear cress).